Here is a 316-residue protein sequence, read N- to C-terminus: Zinc finger protein 367 (316 aa).

The segment at 61-97 (VTLGPGSGSGAASPTRTSSSPAEADPLSCPEHLKDGI) is disordered. Low complexity predominate over residues 70–82 (GAASPTRTSSSPA). 2 C2H2-type zinc fingers span residues 121-143 (IRCN…KRTH) and 149-173 (YLCD…QRLH). A disordered region spans residues 234 to 294 (QTREQRSPVP…GGVVTARRRL (61 aa)). The segment covering 255-278 (EDQEQQDPLDFLPSDEGEEEEQEE) has biased composition (acidic residues). The stretch at 289–313 (TARRRLQEQRERLHGALALIELANN) forms a coiled coil.

Belongs to the krueppel C2H2-type zinc-finger protein family.

The protein localises to the nucleus. Transcriptional activator. The polypeptide is Zinc finger protein 367 (znf367) (Danio rerio (Zebrafish)).